Consider the following 687-residue polypeptide: Putative pentatricopeptide repeat-containing protein At3g15930 (687 aa).

PPR repeat units follow at residues aspartate 98–proline 132, aspartate 133–serine 168, asparagine 169–glutamate 199, aspartate 200–proline 234, threonine 235–proline 269, serine 270–serine 304, tryptophan 305–arginine 331, aspartate 332–proline 366, aspartate 367–asparagine 401, aspartate 402–arginine 432, aspartate 433–proline 467, aspartate 468–aspartate 498, and serine 504–asparagine 534. The segment at valine 539–asparagine 614 is type E motif. Residues glycine 615–threonine 645 are type E(+) motif.

This sequence belongs to the PPR family. PCMP-E subfamily.

This Arabidopsis thaliana (Mouse-ear cress) protein is Putative pentatricopeptide repeat-containing protein At3g15930 (PCMP-E51).